A 135-amino-acid polypeptide reads, in one-letter code: Histone H3 type 2 (135 aa).

Positions 1 to 40 (MARTKQTARKSTGGKAPRKQLATKAARKTPATGGVKKPHR) are disordered. K5 bears the N6-methyllysine mark. K10 is modified (N6-acetyllysine; alternate). K10 carries the N6-methyllysine; alternate modification. S11 is subject to Phosphoserine. The residue at position 12 (T12) is a Phosphothreonine. K15, K19, and K24 each carry N6-acetyllysine. Residue K28 is modified to N6-acetyllysine; alternate. An N6-methyllysine; alternate modification is found at K28. N6-methyllysine is present on residues K36 and K37.

The protein belongs to the histone H3 family. In terms of assembly, the nucleosome is a histone octamer containing two molecules each of H2A, H2B, H3 and H4 assembled in one H3-H4 heterotetramer and two H2A-H2B heterodimers. The octamer wraps approximately 147 bp of DNA. In terms of processing, acetylation is generally linked to gene activation. Acetylated to form H3K9ac (11%), H3K14ac (17%), H3K18ac (11%), H3K23ac (16%) and H3K27ac (7%). H3K4, H3K35 and H3K36 are not acetylated. H3K4me prevents acetylation. 32% of the histone H3 are acetylated with, on average, 2.4 acetyl-Lys. They are all continuously deacatylated and re-acetylated with a half-life of approximately 2 minutes. Post-translationally, monomethylated to form H3K4me1 (81%), H3K9me1 (16%), H3K27me1 (25%), H3K35me1 (25%) and H3K36me1 (5%). No methylation at H3K14, H3K18 and H3K23. Methylated by a protein complex that includes Mut11. Set1 methylates specifically H3K4. H3K4me1 is associated with silenced euchromatin. Set3 forms H3K9me1, while H3K9me2 is undetected. H3K9me1 is specifically associated with silent, multi-copy transgenes. No phosphorylation detected.

The protein resides in the nucleus. It localises to the chromosome. Functionally, core component of nucleosome. Nucleosomes wrap and compact DNA into chromatin, limiting DNA accessibility to the cellular machineries which require DNA as a template. Histones thereby play a central role in transcription regulation, DNA repair, DNA replication and chromosomal stability. DNA accessibility is regulated via a complex set of post-translational modifications of histones, also called histone code, and nucleosome remodeling. The chain is Histone H3 type 2 (ch3-II) from Chlamydomonas reinhardtii (Chlamydomonas smithii).